A 215-amino-acid polypeptide reads, in one-letter code: Fibrillarin-like rRNA/tRNA 2'-O-methyltransferase (215 aa).

Residues 1–29 are disordered; that stretch reads MKASSSLPDGVQRRQFDNRSRLTTHGTTV. Residues 11-20 show a composition bias toward basic and acidic residues; sequence VQRRQFDNRS. S-adenosyl-L-methionine contacts are provided by residues 76-77, 92-93, 117-118, and 138-141; these read TT, EF, DA, and DVAT.

The protein belongs to the methyltransferase superfamily. Fibrillarin family. Interacts with nop5. Component of box C/D small ribonucleoprotein (sRNP) particles that contain rpl7ae, FlpA and nop5, plus a guide RNA.

Its function is as follows. Involved in pre-rRNA and tRNA processing. Utilizes the methyl donor S-adenosyl-L-methionine to catalyze the site-specific 2'-hydroxyl methylation of ribose moieties in rRNA and tRNA. Site specificity is provided by a guide RNA that base pairs with the substrate. Methylation occurs at a characteristic distance from the sequence involved in base pairing with the guide RNA. The sequence is that of Fibrillarin-like rRNA/tRNA 2'-O-methyltransferase from Haloquadratum walsbyi (strain DSM 16790 / HBSQ001).